We begin with the raw amino-acid sequence, 403 residues long: Exodeoxyribonuclease 7 large subunit (403 aa).

This sequence belongs to the XseA family. Heterooligomer composed of large and small subunits.

The protein resides in the cytoplasm. The catalysed reaction is Exonucleolytic cleavage in either 5'- to 3'- or 3'- to 5'-direction to yield nucleoside 5'-phosphates.. In terms of biological role, bidirectionally degrades single-stranded DNA into large acid-insoluble oligonucleotides, which are then degraded further into small acid-soluble oligonucleotides. The polypeptide is Exodeoxyribonuclease 7 large subunit (Streptomyces griseus subsp. griseus (strain JCM 4626 / CBS 651.72 / NBRC 13350 / KCC S-0626 / ISP 5235)).